The primary structure comprises 195 residues: Fe/S biogenesis protein NfuA (195 aa).

2 residues coordinate [4Fe-4S] cluster: C152 and C155.

Belongs to the NfuA family. In terms of assembly, homodimer. [4Fe-4S] cluster serves as cofactor.

Functionally, involved in iron-sulfur cluster biogenesis. Binds a 4Fe-4S cluster, can transfer this cluster to apoproteins, and thereby intervenes in the maturation of Fe/S proteins. Could also act as a scaffold/chaperone for damaged Fe/S proteins. The polypeptide is Fe/S biogenesis protein NfuA (Vibrio cholerae serotype O1 (strain ATCC 39541 / Classical Ogawa 395 / O395)).